A 500-amino-acid chain; its full sequence is Coiled-coil domain-containing protein 85A (500 aa).

The span at M1–S23 shows a compositional bias: low complexity. The interval M1 to D30 is disordered. Coiled-coil stretches lie at residues E38–C104 and M132–K171. Disordered stretches follow at residues R200–N405 and N426–P465. The span at D204–D215 shows a compositional bias: low complexity. Residues H231 to L254 show a composition bias toward basic and acidic residues. A compositionally biased stretch (gly residues) spans G372–R381. Residues G383–S395 show a composition bias toward basic and acidic residues. Residues M404–L429 adopt a coiled-coil conformation. Polar residues predominate over residues F434 to P463. R488 carries the asymmetric dimethylarginine modification.

It belongs to the CCDC85 family. In terms of assembly, may interact with ARVCF; CTNND1; CTNND2 and PKP4.

It is found in the cell junction. It localises to the adherens junction. In terms of biological role, may play a role in cell-cell adhesion and epithelium development through its interaction with proteins of the beta-catenin family. In Mus musculus (Mouse), this protein is Coiled-coil domain-containing protein 85A (Ccdc85a).